The primary structure comprises 357 residues: GTPase Obg (357 aa).

Residues 1 to 159 form the Obg domain; it reads MKFVDEAFID…RNLKLELKVL (159 aa). The 175-residue stretch at 160 to 334 folds into the OBG-type G domain; the sequence is ADVGLLGMPN…LVQSIFQHVH (175 aa). GTP contacts are provided by residues 166-173, 191-195, 213-216, 284-287, and 315-317; these read GMPNAGKS, FTTLH, DIPG, NKLD, and SAL. Residues serine 173 and threonine 193 each contribute to the Mg(2+) site.

Belongs to the TRAFAC class OBG-HflX-like GTPase superfamily. OBG GTPase family. In terms of assembly, monomer. Requires Mg(2+) as cofactor.

It localises to the cytoplasm. In terms of biological role, an essential GTPase which binds GTP, GDP and possibly (p)ppGpp with moderate affinity, with high nucleotide exchange rates and a fairly low GTP hydrolysis rate. Plays a role in control of the cell cycle, stress response, ribosome biogenesis and in those bacteria that undergo differentiation, in morphogenesis control. The protein is GTPase Obg of Acidovorax ebreus (strain TPSY) (Diaphorobacter sp. (strain TPSY)).